The following is an 811-amino-acid chain: Lysine-specific histone demethylase 1 homolog 3 (811 aa).

The segment covering 1-10 has biased composition (pro residues); that stretch reads MSDQPPPYTP. The disordered stretch occupies residues 1–79; that stretch reads MSDQPPPYTP…PSAQPPPRAS (79 aa). Over residues 44-55 the composition is skewed to basic residues; sequence NKRKRTGFRRKL. A compositionally biased stretch (low complexity) spans 56-71; the sequence is PSGSPAAPVAVAASPS. Positions 88–189 constitute an SWIRM domain; it reads NREPTAEAVT…FGVAPAIKER (102 aa). FAD contacts are provided by E227, R229, R235, and E609. The segment at 790–811 is disordered; it reads RNSSRTKTRPSKLKIGIPKSKS.

It belongs to the flavin monoamine oxidase family. It depends on FAD as a cofactor.

In terms of biological role, probable histone demethylase. The chain is Lysine-specific histone demethylase 1 homolog 3 from Oryza sativa subsp. indica (Rice).